A 474-amino-acid polypeptide reads, in one-letter code: Glutamate--tRNA ligase (474 aa).

A 'HIGH' region motif is present at residues 9 to 19; that stretch reads PSPTGYLHVGG. A 'KMSKS' region motif is present at residues 240–244; sequence KLSKR. An ATP-binding site is contributed by Lys-243.

The protein belongs to the class-I aminoacyl-tRNA synthetase family. Glutamate--tRNA ligase type 1 subfamily. In terms of assembly, monomer.

The protein resides in the cytoplasm. The catalysed reaction is tRNA(Glu) + L-glutamate + ATP = L-glutamyl-tRNA(Glu) + AMP + diphosphate. Its function is as follows. Catalyzes the attachment of glutamate to tRNA(Glu) in a two-step reaction: glutamate is first activated by ATP to form Glu-AMP and then transferred to the acceptor end of tRNA(Glu). The protein is Glutamate--tRNA ligase of Aliivibrio fischeri (strain ATCC 700601 / ES114) (Vibrio fischeri).